Reading from the N-terminus, the 526-residue chain is Cytochrome P450 4F5 (526 aa).

C470 contacts heme.

The protein belongs to the cytochrome P450 family. Heme is required as a cofactor. As to expression, high expression in liver and kidney. Lower expression in brain.

The protein localises to the endoplasmic reticulum membrane. Its subcellular location is the microsome membrane. The catalysed reaction is an organic molecule + reduced [NADPH--hemoprotein reductase] + O2 = an alcohol + oxidized [NADPH--hemoprotein reductase] + H2O + H(+). This chain is Cytochrome P450 4F5 (Cyp4f5), found in Rattus norvegicus (Rat).